The primary structure comprises 448 residues: MAMSELGTRKPSDGTVSHLLNVVESELQAGREKGDPTEKQLQIILEDAPLWQRFKEVTNEMIVTKNGRRMFPVLKISVTGLDPNAMYSLLLDFVPTDSHRWKYVNGEWVPAGKPEVSSHSCVYIHPDSPNFGAHWMKAPISFSKVKLTNKLNGGGQIMLNSLHKYEPQVHIVRVGSAHRMVTNCSFPETQFIAVTAYQNEEITALKIKYNPFAKAFLDAKERNHLRDVPEAISESQHVTYSHLGGWIFSNPDGVCTAGNSNYQYAAPLPLPAPHTHHGCEHYSGLRGHRQAPYPSAYMHRNHSPSVNLIESSSNNLQVFSGPDSWTSLSSTPHASILSVPHTNGPINPGPSPYPCLWTISNGAGGPSGPGPEVHASTPGAFLLGNPAVTSPPSVLSTQAPTSAGVEVLGEPSLTSIAVSTWTAVASHPFAGWGGPGAGGHHSPSSLDG.

Residues 45–218 (LEDAPLWQRF…YNPFAKAFLD (174 aa)) constitute a DNA-binding region (T-box).

It localises to the nucleus. Transcriptional regulator involved in developmental processes. Can activate POMC gene expression and repress the alpha glycoprotein subunit and thyroid-stimulating hormone beta promoters. This chain is T-box transcription factor TBX19, found in Homo sapiens (Human).